The following is a 57-amino-acid chain: Protein translocase subunit SecE (57 aa).

The helical transmembrane segment at 33–53 threads the bilayer; sequence GLGILLVGFIGFVIFSIMTFV.

It belongs to the SecE/SEC61-gamma family. As to quaternary structure, component of the Sec protein translocase complex. Heterotrimer consisting of SecY (alpha), SecG (beta) and SecE (gamma) subunits. The heterotrimers can form oligomers, although 1 heterotrimer is thought to be able to translocate proteins. Interacts with the ribosome. May interact with SecDF, and other proteins may be involved.

It localises to the cell membrane. In terms of biological role, essential subunit of the Sec protein translocation channel SecYEG. Clamps together the 2 halves of SecY. May contact the channel plug during translocation. The sequence is that of Protein translocase subunit SecE from Natronomonas pharaonis (strain ATCC 35678 / DSM 2160 / CIP 103997 / JCM 8858 / NBRC 14720 / NCIMB 2260 / Gabara) (Halobacterium pharaonis).